The chain runs to 715 residues: Polyribonucleotide nucleotidyltransferase (715 aa).

Aspartate 488 and aspartate 494 together coordinate Mg(2+). The 60-residue stretch at 555-614 folds into the KH domain; sequence PKIETIKIPVDKIREVIGSGGKVIREIVEKTGAKIDIGEDGTIKIAAAEQTKIDAAKEWI. Residues 624-692 enclose the S1 motif domain; it reads GQIYTGKVVK…DRGKTRLSMK (69 aa). The interval 692–715 is disordered; the sequence is KVVDQETGEDLSKSNEKAEEPADA. Residues 701-715 show a composition bias toward basic and acidic residues; the sequence is DLSKSNEKAEEPADA.

This sequence belongs to the polyribonucleotide nucleotidyltransferase family. Mg(2+) serves as cofactor.

The protein localises to the cytoplasm. The enzyme catalyses RNA(n+1) + phosphate = RNA(n) + a ribonucleoside 5'-diphosphate. In terms of biological role, involved in mRNA degradation. Catalyzes the phosphorolysis of single-stranded polyribonucleotides processively in the 3'- to 5'-direction. The sequence is that of Polyribonucleotide nucleotidyltransferase from Phenylobacterium zucineum (strain HLK1).